Here is a 589-residue protein sequence, read N- to C-terminus: Transcription factor MYC4 (589 aa).

The tract at residues 99–150 (NTVLLGWGDGYYKGEEEKSRKKKSNPASAAEQEHRKRVIRELNSLISGGVGG) is JAZ-interaction domain. Disordered stretches follow at residues 114-133 (EEKS…QEHR), 291-326 (AAPV…PNPK), 340-359 (IENG…VSNN), and 381-422 (ASVA…EAER). Residues 296–308 (NNGGNDSTSNSDS) show a composition bias toward low complexity. The segment covering 309–322 (QPISKLCNGSSVEN) has biased composition (polar residues). The segment covering 381–398 (ASVAKEAESNRVVVEPEK) has biased composition (basic and acidic residues). A compositionally biased stretch (basic residues) spans 399 to 408 (KPRKRGRKPA). The segment covering 409–422 (NGREEPLNHVEAER) has biased composition (basic and acidic residues). The bHLH domain occupies 412–461 (EEPLNHVEAERQRREKLNQRFYSLRAVVPNVSKMDKASLLGDAISYISEL).

Homo- and heterodimer. Interacts with MYB28, MYB29, MYB34, MYB51, MYB76, MYB122, MYC3, AFPH2/NINJA and the JAZ repressors TIFY10A/JAZ1, TIFY10B/JAZ2, TIFY6B/JAZ3, TIFY6A/JAZ4, TIFY11A/JAZ5, TIFY11B/JAZ6, TIFY5B/JAZ7, TIFY5A/JAZ8, TIFY7/JAZ9, TIFY9/JAZ10, TIFY3A/JAZ11 and TIFY3B/JAZ12. Expressed constitutively at low levels. Preferentially expressed in vascular tissues.

Its subcellular location is the nucleus. Functionally, transcription factor involved in jasmonic acid (JA) gene regulation. With MYC2 and MYC3, controls additively subsets of JA-dependent responses. Can form complexes with all known glucosinolate-related MYBs to regulate glucosinolate biosynthesis. Binds to the G-box (5'-CACGTG-3') of promoters. Activates multiple TIFY/JAZ promoters. The sequence is that of Transcription factor MYC4 (MYC4) from Arabidopsis thaliana (Mouse-ear cress).